Reading from the N-terminus, the 319-residue chain is Acetyl-coenzyme A carboxylase carboxyl transferase subunit alpha (319 aa).

A CoA carboxyltransferase C-terminal domain is found at 35–296; it reads NIDEEVHRLR…KAQLLADLAD (262 aa).

This sequence belongs to the AccA family. As to quaternary structure, acetyl-CoA carboxylase is a heterohexamer composed of biotin carboxyl carrier protein (AccB), biotin carboxylase (AccC) and two subunits each of ACCase subunit alpha (AccA) and ACCase subunit beta (AccD).

It is found in the cytoplasm. It carries out the reaction N(6)-carboxybiotinyl-L-lysyl-[protein] + acetyl-CoA = N(6)-biotinyl-L-lysyl-[protein] + malonyl-CoA. It functions in the pathway lipid metabolism; malonyl-CoA biosynthesis; malonyl-CoA from acetyl-CoA: step 1/1. Functionally, component of the acetyl coenzyme A carboxylase (ACC) complex. First, biotin carboxylase catalyzes the carboxylation of biotin on its carrier protein (BCCP) and then the CO(2) group is transferred by the carboxyltransferase to acetyl-CoA to form malonyl-CoA. This chain is Acetyl-coenzyme A carboxylase carboxyl transferase subunit alpha, found in Shigella boydii serotype 4 (strain Sb227).